The primary structure comprises 308 residues: Methionyl-tRNA formyltransferase (308 aa).

110–113 contacts (6S)-5,6,7,8-tetrahydrofolate; the sequence is SLLP.

Belongs to the Fmt family.

The catalysed reaction is L-methionyl-tRNA(fMet) + (6R)-10-formyltetrahydrofolate = N-formyl-L-methionyl-tRNA(fMet) + (6S)-5,6,7,8-tetrahydrofolate + H(+). Attaches a formyl group to the free amino group of methionyl-tRNA(fMet). The formyl group appears to play a dual role in the initiator identity of N-formylmethionyl-tRNA by promoting its recognition by IF2 and preventing the misappropriation of this tRNA by the elongation apparatus. This chain is Methionyl-tRNA formyltransferase, found in Neisseria meningitidis serogroup A / serotype 4A (strain DSM 15465 / Z2491).